The chain runs to 62 residues: UPF0291 protein CLJ_B2839 (62 aa).

The protein belongs to the UPF0291 family.

The protein resides in the cytoplasm. The chain is UPF0291 protein CLJ_B2839 from Clostridium botulinum (strain 657 / Type Ba4).